A 958-amino-acid chain; its full sequence is Glycine dehydrogenase (decarboxylating) 2 (958 aa).

Residue Lys-707 is modified to N6-(pyridoxal phosphate)lysine.

Belongs to the GcvP family. The glycine cleavage system is composed of four proteins: P, T, L and H. The cofactor is pyridoxal 5'-phosphate.

The enzyme catalyses N(6)-[(R)-lipoyl]-L-lysyl-[glycine-cleavage complex H protein] + glycine + H(+) = N(6)-[(R)-S(8)-aminomethyldihydrolipoyl]-L-lysyl-[glycine-cleavage complex H protein] + CO2. Its function is as follows. The glycine cleavage system catalyzes the degradation of glycine. The P protein binds the alpha-amino group of glycine through its pyridoxal phosphate cofactor; CO(2) is released and the remaining methylamine moiety is then transferred to the lipoamide cofactor of the H protein. The polypeptide is Glycine dehydrogenase (decarboxylating) 2 (gcvP2) (Pseudomonas aeruginosa (strain ATCC 15692 / DSM 22644 / CIP 104116 / JCM 14847 / LMG 12228 / 1C / PRS 101 / PAO1)).